Consider the following 42-residue polypeptide: Cytochrome b6-f complex subunit 7 (42 aa).

Residues 19–37 (AVVCFSMTLFGLSLGFGLL) traverse the membrane as a helical segment.

Belongs to the PetM family. The 4 large subunits of the cytochrome b6-f complex are cytochrome b6, subunit IV (17 kDa polypeptide, PetD), cytochrome f and the Rieske protein, while the 4 small subunits are PetG, PetL, PetM and PetN. The complex functions as a dimer.

The protein resides in the plastid. It is found in the chloroplast thylakoid membrane. In terms of biological role, component of the cytochrome b6-f complex, which mediates electron transfer between photosystem II (PSII) and photosystem I (PSI), cyclic electron flow around PSI, and state transitions. The sequence is that of Cytochrome b6-f complex subunit 7 from Phaeodactylum tricornutum (strain CCAP 1055/1).